Consider the following 365-residue polypeptide: UDP-galactose transporter homolog 1 (365 aa).

2 helical membrane-spanning segments follow: residues 42-62 and 80-100; these read IIDL…WAVL and ASLV…YAYL. N-linked (GlcNAc...) asparagine glycosylation is present at N115. The next 2 membrane-spanning stretches (helical) occupy residues 182-202 and 206-226; these read YAVV…HAAP and SGAG…SMLL. Residue N231 is glycosylated (N-linked (GlcNAc...) asparagine). 4 helical membrane passes run 249–269, 289–309, 315–335, and 339–359; these read VMCG…LTFS, DIVL…QTLE, VLVT…VVWF, and LTLG…FEAW.

This sequence belongs to the nucleotide-sugar transporter family. SLC35B subfamily.

The protein localises to the endoplasmic reticulum membrane. Its function is as follows. May be involved in specific transport of UDP-Gal from the cytosol to the Golgi lumen. Involved in the maintenance of optimal conditions for the folding of secretory pathway proteins in the endoplasmic reticulum. This Yarrowia lipolytica (strain CLIB 122 / E 150) (Yeast) protein is UDP-galactose transporter homolog 1 (HUT1).